Here is a 271-residue protein sequence, read N- to C-terminus: 5'-AMP-activated protein kinase subunit beta-2 (271 aa).

The interval 1 to 47 (MGNTTSERVSGERHGAKAARAEGGGHGPGKEHKIMVGSTDDPSVFSL) is disordered. Residue Ser38 is modified to Phosphoserine; by ULK1. Residue Thr39 is modified to Phosphothreonine; by ULK1. Ser68 carries the post-translational modification Phosphoserine; by ULK1. A phosphoserine mark is found at Ser94 and Ser107. Thr147 is modified (phosphothreonine). 2 positions are modified to phosphoserine: Ser157 and Ser169. Residue Ser173 is modified to Phosphoserine; by ULK1. The residue at position 183 (Ser183) is a Phosphoserine.

It belongs to the 5'-AMP-activated protein kinase beta subunit family. As to quaternary structure, AMPK is a heterotrimer of an alpha catalytic subunit (PRKAA1 or PRKAA2), a beta (PRKAB1 or PRKAB2) and a gamma non-catalytic subunits (PRKAG1, PRKAG2 or PRKAG3). Phosphorylated when associated with the catalytic subunit (PRKAA1 or PRKAA2). Phosphorylated by ULK1 and ULK2; leading to negatively regulate AMPK activity and suggesting the existence of a regulatory feedback loop between ULK1, ULK2 and AMPK.

Its function is as follows. Non-catalytic subunit of AMP-activated protein kinase (AMPK), an energy sensor protein kinase that plays a key role in regulating cellular energy metabolism. In response to reduction of intracellular ATP levels, AMPK activates energy-producing pathways and inhibits energy-consuming processes: inhibits protein, carbohydrate and lipid biosynthesis, as well as cell growth and proliferation. AMPK acts via direct phosphorylation of metabolic enzymes, and by longer-term effects via phosphorylation of transcription regulators. Also acts as a regulator of cellular polarity by remodeling the actin cytoskeleton; probably by indirectly activating myosin. Beta non-catalytic subunit acts as a scaffold on which the AMPK complex assembles, via its C-terminus that bridges alpha (PRKAA1 or PRKAA2) and gamma subunits (PRKAG1, PRKAG2 or PRKAG3). This Rattus norvegicus (Rat) protein is 5'-AMP-activated protein kinase subunit beta-2 (Prkab2).